We begin with the raw amino-acid sequence, 72 residues long: Translation initiation factor IF-1 (72 aa).

Positions 1–72 constitute an S1-like domain; the sequence is MAKEDSIEMQ…TKGRIVFRAR (72 aa).

It belongs to the IF-1 family. In terms of assembly, component of the 30S ribosomal translation pre-initiation complex which assembles on the 30S ribosome in the order IF-2 and IF-3, IF-1 and N-formylmethionyl-tRNA(fMet); mRNA recruitment can occur at any time during PIC assembly.

Its subcellular location is the cytoplasm. In terms of biological role, one of the essential components for the initiation of protein synthesis. Stabilizes the binding of IF-2 and IF-3 on the 30S subunit to which N-formylmethionyl-tRNA(fMet) subsequently binds. Helps modulate mRNA selection, yielding the 30S pre-initiation complex (PIC). Upon addition of the 50S ribosomal subunit IF-1, IF-2 and IF-3 are released leaving the mature 70S translation initiation complex. The protein is Translation initiation factor IF-1 of Shewanella amazonensis (strain ATCC BAA-1098 / SB2B).